Reading from the N-terminus, the 815-residue chain is Phenylalanine--tRNA ligase beta subunit (815 aa).

Residues 40 to 155 (APPFDKIVVA…EDAPVGQNIR (116 aa)) form the tRNA-binding domain. Residues 406-485 (PQRRPVSLRL…RIYGFERIAA (80 aa)) form the B5 domain. Mg(2+) is bound by residues Asp463, Asp469, Glu472, and Glu473. Positions 712–814 (SKFPAAVRDL…LGEAFQARLR (103 aa)) constitute an FDX-ACB domain.

This sequence belongs to the phenylalanyl-tRNA synthetase beta subunit family. Type 1 subfamily. Tetramer of two alpha and two beta subunits. Mg(2+) is required as a cofactor.

Its subcellular location is the cytoplasm. It catalyses the reaction tRNA(Phe) + L-phenylalanine + ATP = L-phenylalanyl-tRNA(Phe) + AMP + diphosphate + H(+). The chain is Phenylalanine--tRNA ligase beta subunit from Cupriavidus pinatubonensis (strain JMP 134 / LMG 1197) (Cupriavidus necator (strain JMP 134)).